Reading from the N-terminus, the 206-residue chain is Small ribosomal subunit protein uS4 (206 aa).

An S4 RNA-binding domain is found at 98-158 (RRLDNVVFRL…EKSRSMELIK (61 aa)).

The protein belongs to the universal ribosomal protein uS4 family. As to quaternary structure, part of the 30S ribosomal subunit. Contacts protein S5. The interaction surface between S4 and S5 is involved in control of translational fidelity.

Functionally, one of the primary rRNA binding proteins, it binds directly to 16S rRNA where it nucleates assembly of the body of the 30S subunit. In terms of biological role, with S5 and S12 plays an important role in translational accuracy. The polypeptide is Small ribosomal subunit protein uS4 (Thermoanaerobacter pseudethanolicus (strain ATCC 33223 / 39E) (Clostridium thermohydrosulfuricum)).